A 371-amino-acid polypeptide reads, in one-letter code: Protein arginine N-methyltransferase 1 (371 aa).

Residues 50–361 (KDYYFDSYAH…DLDFKGQLCE (312 aa)) form the SAM-dependent MTase PRMT-type domain. S-adenosyl-L-methionine contacts are provided by histidine 63, arginine 72, glycine 96, and glutamate 118. Arginine 72 provides a ligand contact to S-adenosyl-L-homocysteine. Position 118 (glutamate 118) interacts with S-adenosyl-L-homocysteine. Residue lysine 134 is modified to N6-succinyllysine. Lysine 145 is covalently cross-linked (Glycyl lysine isopeptide (Lys-Gly) (interchain with G-Cter in ubiquitin)). Valine 146 and glutamate 147 together coordinate S-adenosyl-L-homocysteine. Glutamate 147 is a binding site for S-adenosyl-L-methionine. Active-site residues include glutamate 162 and glutamate 171. 2 positions are modified to N6-acetyllysine: lysine 228 and lysine 233. Serine 304 and serine 307 each carry phosphoserine.

This sequence belongs to the class I-like SAM-binding methyltransferase superfamily. Protein arginine N-methyltransferase family. Homodimer. Homooctamer; individual homodimers associates to form a homooctamer. Individual homodimers can associate to form a homohexamer. Heterodimer with PRMT8. Interacts with BTG1, BTG2, NFATC2IP and IFNAR1. Interacts with and methylates CHTOP, thereby enabling the interaction of CHTOP with the 5FMC complex. Interacts with ILF3 and SUPT5H. Interacts with and methylates FOXO1, leading to the nuclear retention of FOXO1 and the stimulation of FOXO1 transcriptional activity. Methylation of FOXO1 is increased upon oxidative stress. Interacts with and probably methylates ATXN2L. Component of the methylosome, a 20S complex containing at least CLNS1A/pICln, PRMT5/SKB1, WDR77/MEP50, PRMT1 and ERH. Interacts with DHX9 (via RGG region). Interacts (via N-terminus) with HABP4. Interacts with MAP3K5/ASK1; the interaction results in MAP3K5 methylation by PRMT1 which inhibits MAP3K5 activation. Interacts with TRIM48; the interaction results in ubiquitination of PRMT1 by TRIM48, leading to PRMT1 proteasomal degradation and activation of MAP3K5. Interacts with GATOR1 complex; this interaction is S-adenosyl-L-methionine (SAM) dependent and is perturbated by SAMTOR in a SAM-sensitive manner. Interacts with GFI1; promoting recognition and binding of MRE11 and TP53BP1 substrates by PRMT1. Post-translationally, polyubiquitinated at Lys-145 by the SCF(FBXL17) complex, leading to its subsequent degradation. Ubiquitination is regulated by acetylation at Lys-228 and Lys-233. Polyubiquitinated by E3 ubiquitin-protein ligase TRIM48, leading to suppression of MAP3K5/ASK1 methylation and subsequent MAP3K5 activation. In terms of processing, acetylation at Lys-228 and Lys-233 regulates ubiquitination by the SCF(FBXL17) complex. Acetylated at Lys-233 by p300/EP300. Deacetylated at Lys-228 and Lys-233 by SIRT1. As to expression, widely expressed. Expressed strongly in colorectal cancer cells (at protein level). Expressed strongly in colorectal cancer tissues compared to wild-type colon samples (at protein level). Expressed strongly in colorectal cancer tissues compared to wild-type colon samples.

It localises to the nucleus. It is found in the nucleoplasm. The protein resides in the cytoplasm. Its subcellular location is the cytosol. The protein localises to the lysosome membrane. The enzyme catalyses L-arginyl-[protein] + 2 S-adenosyl-L-methionine = N(omega),N(omega)-dimethyl-L-arginyl-[protein] + 2 S-adenosyl-L-homocysteine + 2 H(+). It catalyses the reaction L-arginyl-[protein] + S-adenosyl-L-methionine = N(omega)-methyl-L-arginyl-[protein] + S-adenosyl-L-homocysteine + H(+). It carries out the reaction N(omega)-methyl-L-arginyl-[protein] + S-adenosyl-L-methionine = N(omega),N(omega)-dimethyl-L-arginyl-[protein] + S-adenosyl-L-homocysteine + H(+). Functionally, arginine methyltransferase that methylates (mono and asymmetric dimethylation) the guanidino nitrogens of arginyl residues present in proteins such as ESR1, histone H2, H3 and H4, FMR1, ILF3, HNRNPA1, HNRNPD, NFATC2IP, SUPT5H, TAF15, EWS, HABP4, SERBP1, RBM15, FOXO1, CHTOP, MAP3K5/ASK1, MICU1 and NPRL2. Constitutes the main enzyme that mediates monomethylation and asymmetric dimethylation of histone H4 'Arg-3' (H4R3me1 and H4R3me2a, respectively), a specific tag for epigenetic transcriptional activation. May be involved in the regulation of TAF15 transcriptional activity, act as an activator of estrogen receptor (ER)-mediated transactivation, play a key role in neurite outgrowth and act as a negative regulator of megakaryocytic differentiation, by modulating p38 MAPK pathway. Methylates RBM15, promoting ubiquitination and degradation of RBM15. Methylates MRE11 and TP53BP1, promoting the DNA damage response. Methylates FOXO1 and retains it in the nucleus increasing its transcriptional activity. Methylates CHTOP and this methylation is critical for its 5-hydroxymethylcytosine (5hmC)-binding activity. Methylates MAP3K5/ASK1 at 'Arg-78' and 'Arg-80' which promotes association of MAP3K5 with thioredoxin and negatively regulates MAP3K5 association with TRAF2, inhibiting MAP3K5 stimulation and MAP3K5-induced activation of JNK. Methylates H4R3 in genes involved in glioblastomagenesis in a CHTOP- and/or TET1-dependent manner. Plays a role in regulating alternative splicing in the heart. Methylates NPRL2 at 'Arg-78' leading to inhibition of its GTPase activator activity and then the GATOR1 complex and consequently inducing timely mTORC1 activation under methionine-sufficient conditions. In Homo sapiens (Human), this protein is Protein arginine N-methyltransferase 1.